The sequence spans 213 residues: tRNA (guanine-N(7)-)-methyltransferase (213 aa).

4 residues coordinate S-adenosyl-L-methionine: glutamate 44, aspartate 69, aspartate 96, and aspartate 118. Residue aspartate 118 is part of the active site. Substrate is bound at residue lysine 122. Residues 124 to 129 (RHEKRR) are interaction with RNA. Substrate is bound by residues aspartate 154 and 191 to 194 (TEYE).

This sequence belongs to the class I-like SAM-binding methyltransferase superfamily. TrmB family.

The catalysed reaction is guanosine(46) in tRNA + S-adenosyl-L-methionine = N(7)-methylguanosine(46) in tRNA + S-adenosyl-L-homocysteine. The protein operates within tRNA modification; N(7)-methylguanine-tRNA biosynthesis. Catalyzes the formation of N(7)-methylguanine at position 46 (m7G46) in tRNA. This is tRNA (guanine-N(7)-)-methyltransferase from Streptococcus thermophilus (strain CNRZ 1066).